We begin with the raw amino-acid sequence, 288 residues long: Putative alkaline ceramidase dcd3A (288 aa).

N23 carries an N-linked (GlcNAc...) asparagine glycan. 7 helical membrane passes run I41 to V61, V78 to T98, L105 to V125, H146 to I166, I172 to I192, S206 to E226, and L240 to I260.

The protein belongs to the alkaline ceramidase family.

The protein resides in the membrane. The sequence is that of Putative alkaline ceramidase dcd3A (dcd3A) from Dictyostelium discoideum (Social amoeba).